The sequence spans 969 residues: MTTETLTTLEQHDRFLGRHIGPDSEQRQEMLNYVGAESLEDLTTQIVPESIRLNRDLAVGDNVSEAEGLAYIRQIADKNKVFKSYIGMGYYGTEVPSVIQRNVLENPGWYTAYTPYQPEIAQGRLEAILNFQQLSMDLTGLDLASSSLLDEATAAAEAMALAKRVSKAKKANIFFVADDVFPQTLDVIKTRAECFGMEVVVGPAEEAVNYELFGALFQYTNRYGQITDFTELFTALHEKKAIISVAADIMSLVMLKSPGSMGADVVFGNSQRFGVPMGFGGPHAAFFVSRDAHKRSLPGRIIGVSQDTRGNRALRMAMQTREQHIRREKANSNICTAQVLLANMASFYAVFHGPQGLKVIAERIHRLTDILAAGLTAKGVELVNNTWFDTLSIKGLDAKAVQKRADAAGINLRVDSCSESDGSSDQVLGVSLAETTTRTDVTQLFDVILGEGHGLDVAALDAQVMADSTSVPAELVRQDAILTHPTFNRYHSETEMMRYIKRLENKDLALNHSMISLGSCTMKLNAATEMMPITWPEFGNMHPFCPQDQAQGYAQLLGELSEWLVDITGYDAVSLQPNSGAQGEYAGLLAIKQYHESRGDAHRNICLIPSSAHGTNPASAQLAGMKIVVTACDKAGNIDMEDLKAKAAEVADNLSCIMVTYPSTHGVYEETIGEICEVIHQHGGQVYLDGANMNAQVGLTSPGFIGADVSHLNLHKTFAIPHGGGGPGMGPIGVKKHLAPFLSGHSVVKHGLESDGNGAVSAAPYGSAGILPITWMYIKLLGKQGLRESTQVALLNANYMMKKLSEHYPVLYTGRNDRVAHECIIDLRPLKEASGVTEMDIAKRLNDYGFHAPTMSFPVAGTLMIEPTESESKVELDRFIEAMVSIRAEAARVESGEWPVDNNPLHNAPHTLADIMDPEFDSRPYSREVAVFPTAAVKQNKFWPTVNRIDDVYGDRNLFCACVPISDYE.

Lys-716 carries the post-translational modification N6-(pyridoxal phosphate)lysine.

Belongs to the GcvP family. The glycine cleavage system is composed of four proteins: P, T, L and H. Pyridoxal 5'-phosphate is required as a cofactor.

The catalysed reaction is N(6)-[(R)-lipoyl]-L-lysyl-[glycine-cleavage complex H protein] + glycine + H(+) = N(6)-[(R)-S(8)-aminomethyldihydrolipoyl]-L-lysyl-[glycine-cleavage complex H protein] + CO2. The glycine cleavage system catalyzes the degradation of glycine. The P protein binds the alpha-amino group of glycine through its pyridoxal phosphate cofactor; CO(2) is released and the remaining methylamine moiety is then transferred to the lipoamide cofactor of the H protein. This chain is Glycine dehydrogenase (decarboxylating), found in Shewanella woodyi (strain ATCC 51908 / MS32).